The chain runs to 220 residues: Fructose-6-phosphate aldolase 1 (220 aa).

Catalysis depends on lysine 85, which acts as the Schiff-base intermediate with substrate.

Belongs to the transaldolase family. Type 3A subfamily. In terms of assembly, homodecamer.

The protein localises to the cytoplasm. The enzyme catalyses beta-D-fructose 6-phosphate = dihydroxyacetone + D-glyceraldehyde 3-phosphate. Catalyzes the reversible formation of fructose 6-phosphate from dihydroxyacetone and D-glyceraldehyde 3-phosphate via an aldolization reaction. In Escherichia coli O157:H7, this protein is Fructose-6-phosphate aldolase 1 (fsaA).